We begin with the raw amino-acid sequence, 431 residues long: Citrate synthase 1 (431 aa).

Catalysis depends on residues H309 and D366.

Belongs to the citrate synthase family. Homohexamer.

The catalysed reaction is oxaloacetate + acetyl-CoA + H2O = citrate + CoA + H(+). Its pathway is carbohydrate metabolism; tricarboxylic acid cycle; isocitrate from oxaloacetate: step 1/2. This is Citrate synthase 1 (gltA2) from Mycobacterium tuberculosis (strain CDC 1551 / Oshkosh).